A 563-amino-acid polypeptide reads, in one-letter code: Group II intron-interrupted relaxase LtrB (563 aa).

Residue tyrosine 44 is part of the active site. 2 residues coordinate Mg(2+): histidine 159 and histidine 161.

This sequence belongs to the mobilization (MOB) protein type 1 family. The cofactor is Mg(2+). Requires Mn(2+) as cofactor.

Functionally, mediates initiation of conjugal transfer possibly by introducing a single-stranded nick at the potential origin of transfer. In Lactococcus lactis subsp. cremoris (strain MG1363), this protein is Group II intron-interrupted relaxase LtrB (ltrBE1).